Consider the following 197-residue polypeptide: Imidazoleglycerol-phosphate dehydratase (197 aa).

It belongs to the imidazoleglycerol-phosphate dehydratase family.

The protein localises to the cytoplasm. It carries out the reaction D-erythro-1-(imidazol-4-yl)glycerol 3-phosphate = 3-(imidazol-4-yl)-2-oxopropyl phosphate + H2O. The protein operates within amino-acid biosynthesis; L-histidine biosynthesis; L-histidine from 5-phospho-alpha-D-ribose 1-diphosphate: step 6/9. The chain is Imidazoleglycerol-phosphate dehydratase from Thioalkalivibrio sulfidiphilus (strain HL-EbGR7).